Here is a 696-residue protein sequence, read N- to C-terminus: Elongation factor G (696 aa).

In terms of domain architecture, tr-type G spans 10–290 (THFRNIGIAA…AVVDYLPSPL (281 aa)). GTP is bound by residues 19 to 26 (AHIDAGKT), 89 to 93 (DTPGH), and 143 to 146 (NKMD).

Belongs to the TRAFAC class translation factor GTPase superfamily. Classic translation factor GTPase family. EF-G/EF-2 subfamily.

The protein localises to the cytoplasm. Functionally, catalyzes the GTP-dependent ribosomal translocation step during translation elongation. During this step, the ribosome changes from the pre-translocational (PRE) to the post-translocational (POST) state as the newly formed A-site-bound peptidyl-tRNA and P-site-bound deacylated tRNA move to the P and E sites, respectively. Catalyzes the coordinated movement of the two tRNA molecules, the mRNA and conformational changes in the ribosome. This is Elongation factor G from Deinococcus geothermalis (strain DSM 11300 / CIP 105573 / AG-3a).